Consider the following 309-residue polypeptide: Branched-chain-amino-acid aminotransferase (309 aa).

Lysine 160 bears the N6-(pyridoxal phosphate)lysine mark.

It belongs to the class-IV pyridoxal-phosphate-dependent aminotransferase family. In terms of assembly, homohexamer. The cofactor is pyridoxal 5'-phosphate.

The catalysed reaction is L-leucine + 2-oxoglutarate = 4-methyl-2-oxopentanoate + L-glutamate. It carries out the reaction L-isoleucine + 2-oxoglutarate = (S)-3-methyl-2-oxopentanoate + L-glutamate. The enzyme catalyses L-valine + 2-oxoglutarate = 3-methyl-2-oxobutanoate + L-glutamate. It participates in amino-acid biosynthesis; L-isoleucine biosynthesis; L-isoleucine from 2-oxobutanoate: step 4/4. The protein operates within amino-acid biosynthesis; L-leucine biosynthesis; L-leucine from 3-methyl-2-oxobutanoate: step 4/4. Its pathway is amino-acid biosynthesis; L-valine biosynthesis; L-valine from pyruvate: step 4/4. In terms of biological role, acts on leucine, isoleucine and valine. In Salmonella typhi, this protein is Branched-chain-amino-acid aminotransferase (ilvE).